Here is a 466-residue protein sequence, read N- to C-terminus: NADH-quinone oxidoreductase subunit N (466 aa).

Transmembrane regions (helical) follow at residues L9–V29, C33–P53, P68–A88, E100–A120, F122–Y142, L157–A177, S190–F210, V232–L252, A263–Q283, M289–G309, A314–A334, G359–V379, A394–V416, and L438–F458.

Belongs to the complex I subunit 2 family. As to quaternary structure, NDH-1 is composed of 14 different subunits. Subunits NuoA, H, J, K, L, M, N constitute the membrane sector of the complex.

The protein resides in the cell inner membrane. It carries out the reaction a quinone + NADH + 5 H(+)(in) = a quinol + NAD(+) + 4 H(+)(out). In terms of biological role, NDH-1 shuttles electrons from NADH, via FMN and iron-sulfur (Fe-S) centers, to quinones in the respiratory chain. The immediate electron acceptor for the enzyme in this species is believed to be ubiquinone. Couples the redox reaction to proton translocation (for every two electrons transferred, four hydrogen ions are translocated across the cytoplasmic membrane), and thus conserves the redox energy in a proton gradient. In Geobacter metallireducens (strain ATCC 53774 / DSM 7210 / GS-15), this protein is NADH-quinone oxidoreductase subunit N.